The primary structure comprises 1058 residues: Carbamoyl phosphate synthase large chain (1058 aa).

A carboxyphosphate synthetic domain region spans residues 1–401 (MPKRKDIQKI…SLLKACRSLE (401 aa)). ATP-binding residues include R129, R169, G175, G176, R208, I210, E215, G241, I242, H243, Q284, and E298. One can recognise an ATP-grasp 1 domain in the interval 133–327 (KQLMQELDQP…IAKLAAKIAV (195 aa)). Q284, E298, and N300 together coordinate Mg(2+). Positions 284, 298, and 300 each coordinate Mn(2+). Residues 402-546 (IGVCHNEMTS…YSTYELENES (145 aa)) are oligomerization domain. The segment at 547-929 (VQSNKESILV…ALYKAFEANN (383 aa)) is carbamoyl phosphate synthetic domain. Residues 671 to 861 (EKALKELGIP…MAQIATKLIL (191 aa)) enclose the ATP-grasp 2 domain. R707, S746, I748, E752, G777, V778, H779, S780, Q820, and E832 together coordinate ATP. Positions 820, 832, and 834 each coordinate Mg(2+). Residues Q820, E832, and N834 each contribute to the Mn(2+) site. The region spanning 930–1058 (SHLSEFGQIV…ESRCFNIEAI (129 aa)) is the MGS-like domain. The allosteric domain stretch occupies residues 930 to 1058 (SHLSEFGQIV…ESRCFNIEAI (129 aa)).

It belongs to the CarB family. As to quaternary structure, composed of two chains; the small (or glutamine) chain promotes the hydrolysis of glutamine to ammonia, which is used by the large (or ammonia) chain to synthesize carbamoyl phosphate. Tetramer of heterodimers (alpha,beta)4. It depends on Mg(2+) as a cofactor. The cofactor is Mn(2+).

The catalysed reaction is hydrogencarbonate + L-glutamine + 2 ATP + H2O = carbamoyl phosphate + L-glutamate + 2 ADP + phosphate + 2 H(+). It carries out the reaction hydrogencarbonate + NH4(+) + 2 ATP = carbamoyl phosphate + 2 ADP + phosphate + 2 H(+). The protein operates within amino-acid biosynthesis; L-arginine biosynthesis; carbamoyl phosphate from bicarbonate: step 1/1. Its pathway is pyrimidine metabolism; UMP biosynthesis via de novo pathway; (S)-dihydroorotate from bicarbonate: step 1/3. Functionally, large subunit of the glutamine-dependent carbamoyl phosphate synthetase (CPSase). CPSase catalyzes the formation of carbamoyl phosphate from the ammonia moiety of glutamine, carbonate, and phosphate donated by ATP, constituting the first step of 2 biosynthetic pathways, one leading to arginine and/or urea and the other to pyrimidine nucleotides. The large subunit (synthetase) binds the substrates ammonia (free or transferred from glutamine from the small subunit), hydrogencarbonate and ATP and carries out an ATP-coupled ligase reaction, activating hydrogencarbonate by forming carboxy phosphate which reacts with ammonia to form carbamoyl phosphate. The polypeptide is Carbamoyl phosphate synthase large chain (Streptococcus pyogenes serotype M6 (strain ATCC BAA-946 / MGAS10394)).